The following is a 339-amino-acid chain: tRNA N6-adenosine threonylcarbamoyltransferase (339 aa).

Fe cation contacts are provided by H111 and H115. Substrate contacts are provided by residues V134 to G138, D167, G180, and N279. D307 is a binding site for Fe cation.

It belongs to the KAE1 / TsaD family. The cofactor is Fe(2+).

Its subcellular location is the cytoplasm. The catalysed reaction is L-threonylcarbamoyladenylate + adenosine(37) in tRNA = N(6)-L-threonylcarbamoyladenosine(37) in tRNA + AMP + H(+). Functionally, required for the formation of a threonylcarbamoyl group on adenosine at position 37 (t(6)A37) in tRNAs that read codons beginning with adenine. Is involved in the transfer of the threonylcarbamoyl moiety of threonylcarbamoyl-AMP (TC-AMP) to the N6 group of A37, together with TsaE and TsaB. TsaD likely plays a direct catalytic role in this reaction. The chain is tRNA N6-adenosine threonylcarbamoyltransferase from Syntrophobacter fumaroxidans (strain DSM 10017 / MPOB).